A 40-amino-acid polypeptide reads, in one-letter code: Toxin CSTX-17 (40 aa).

4 cysteine pairs are disulfide-bonded: cysteine 2–cysteine 17, cysteine 9–cysteine 22, cysteine 16–cysteine 33, and cysteine 24–cysteine 31. Tryptophan amide is present on tryptophan 40.

Contains 4 disulfide bonds. In terms of tissue distribution, expressed by the venom gland.

It localises to the secreted. This chain is Toxin CSTX-17, found in Cupiennius salei (American wandering spider).